We begin with the raw amino-acid sequence, 303 residues long: uncharacterized protein (303 aa).

The signal sequence occupies residues 1–24; it reads MNRIALVFLYSLFLFNLAIGRVES. N-linked (GlcNAc...) asparagine glycosylation is present at Asn116. Positions 124–179 are disordered; sequence FTRQQQKKSHDDDDDDDDSDSDESKEEEEKKKRDRKHRRDKRQAITQGSQNNTDPN. Positions 135-149 are enriched in acidic residues; sequence DDDDDDDSDSDESKE. Basic residues predominate over residues 155–164; that stretch reads KRDRKHRRDK. Over residues 167–178 the composition is skewed to polar residues; that stretch reads AITQGSQNNTDP.

This is an uncharacterized protein from Caenorhabditis elegans.